Reading from the N-terminus, the 264-residue chain is Acyl-[acyl-carrier-protein]--UDP-N-acetylglucosamine O-acyltransferase (264 aa).

It belongs to the transferase hexapeptide repeat family. LpxA subfamily. As to quaternary structure, homotrimer.

The protein resides in the cytoplasm. The enzyme catalyses a (3R)-hydroxyacyl-[ACP] + UDP-N-acetyl-alpha-D-glucosamine = a UDP-3-O-[(3R)-3-hydroxyacyl]-N-acetyl-alpha-D-glucosamine + holo-[ACP]. The protein operates within glycolipid biosynthesis; lipid IV(A) biosynthesis; lipid IV(A) from (3R)-3-hydroxytetradecanoyl-[acyl-carrier-protein] and UDP-N-acetyl-alpha-D-glucosamine: step 1/6. Functionally, involved in the biosynthesis of lipid A, a phosphorylated glycolipid that anchors the lipopolysaccharide to the outer membrane of the cell. This chain is Acyl-[acyl-carrier-protein]--UDP-N-acetylglucosamine O-acyltransferase, found in Chlorobaculum parvum (strain DSM 263 / NCIMB 8327) (Chlorobium vibrioforme subsp. thiosulfatophilum).